The sequence spans 310 residues: Methionyl-tRNA formyltransferase (310 aa).

109 to 112 provides a ligand contact to (6S)-5,6,7,8-tetrahydrofolate; the sequence is SLLP.

Belongs to the Fmt family.

The catalysed reaction is L-methionyl-tRNA(fMet) + (6R)-10-formyltetrahydrofolate = N-formyl-L-methionyl-tRNA(fMet) + (6S)-5,6,7,8-tetrahydrofolate + H(+). Its function is as follows. Attaches a formyl group to the free amino group of methionyl-tRNA(fMet). The formyl group appears to play a dual role in the initiator identity of N-formylmethionyl-tRNA by promoting its recognition by IF2 and preventing the misappropriation of this tRNA by the elongation apparatus. The polypeptide is Methionyl-tRNA formyltransferase (Pseudomonas entomophila (strain L48)).